The chain runs to 161 residues: Large ribosomal subunit protein uL11 (161 aa).

It belongs to the universal ribosomal protein uL11 family. As to quaternary structure, part of the ribosomal stalk of the 50S ribosomal subunit. Interacts with L10 and the large rRNA to form the base of the stalk. L10 forms an elongated spine to which L12 dimers bind in a sequential fashion forming a multimeric L10(L12)X complex.

Functionally, forms part of the ribosomal stalk which helps the ribosome interact with GTP-bound translation factors. The chain is Large ribosomal subunit protein uL11 from Methanococcoides burtonii (strain DSM 6242 / NBRC 107633 / OCM 468 / ACE-M).